A 387-amino-acid polypeptide reads, in one-letter code: GDSL esterase/lipase At2g23540 (387 aa).

A signal peptide spans 1 to 32 (MATRASTSSRVSPAFTFLVIFFLLSLTASVEA). Serine 55 acts as the Nucleophile in catalysis. 2 N-linked (GlcNAc...) asparagine glycosylation sites follow: asparagine 139 and asparagine 159. Residues aspartate 352 and histidine 355 contribute to the active site. N-linked (GlcNAc...) asparagine glycosylation occurs at asparagine 380.

The protein belongs to the 'GDSL' lipolytic enzyme family.

It localises to the secreted. In Arabidopsis thaliana (Mouse-ear cress), this protein is GDSL esterase/lipase At2g23540.